We begin with the raw amino-acid sequence, 99 residues long: Small ribosomal subunit protein bS6 (99 aa).

This sequence belongs to the bacterial ribosomal protein bS6 family.

Binds together with bS18 to 16S ribosomal RNA. The sequence is that of Small ribosomal subunit protein bS6 from Lactiplantibacillus plantarum (strain ATCC BAA-793 / NCIMB 8826 / WCFS1) (Lactobacillus plantarum).